Consider the following 425-residue polypeptide: Putative dipeptidase MGYG_00085 (425 aa).

The signal sequence occupies residues 1-31 (MAPERRSRLSETAGLFVSLLALTSIVPVQAV). Zn(2+) contacts are provided by H56, D58, and E168. A disulfide bridge connects residues C107 and C197. H195 is a substrate binding site. H239 and H260 together coordinate Zn(2+). Substrate-binding residues include R271 and D331. N403 carries N-linked (GlcNAc...) asparagine glycosylation.

The protein belongs to the metallo-dependent hydrolases superfamily. Peptidase M19 family. Requires Zn(2+) as cofactor.

It carries out the reaction an L-aminoacyl-L-amino acid + H2O = 2 an L-alpha-amino acid. Functionally, hydrolyzes a wide range of dipeptides. The protein is Putative dipeptidase MGYG_00085 of Arthroderma gypseum (strain ATCC MYA-4604 / CBS 118893) (Microsporum gypseum).